Here is a 336-residue protein sequence, read N- to C-terminus: Mediator of RNA polymerase II transcription subunit 4 (336 aa).

Disordered stretches follow at residues 1–45 (MNST…SNVV) and 59–85 (NVEE…QDEA). Positions 154–192 (QQAAQTIAALERVSEGLDDKIRDMIRKLAECRRELRNYQ) form a coiled coil. The disordered stretch occupies residues 281–336 (PVANGVAQNHNNGYAMERRLSTGYGSDNDGDTNMNGRSGLAGLDIFDDDDDDDDDD). Residues 325–336 (IFDDDDDDDDDD) are compositionally biased toward acidic residues.

Belongs to the Mediator complex subunit 4 family. Component of the Mediator complex.

It is found in the nucleus. Functionally, component of the Mediator complex, a coactivator involved in the regulated transcription of nearly all RNA polymerase II-dependent genes. Mediator functions as a bridge to convey information from gene-specific regulatory proteins to the basal RNA polymerase II transcription machinery. Mediator is recruited to promoters by direct interactions with regulatory proteins and serves as a scaffold for the assembly of a functional preinitiation complex with RNA polymerase II and the general transcription factors. This chain is Mediator of RNA polymerase II transcription subunit 4 (MED4), found in Yarrowia lipolytica (strain CLIB 122 / E 150) (Yeast).